The chain runs to 393 residues: Bifunctional enzyme Fae/Hps (393 aa).

The segment at 1 to 161 is formaldehyde-activating enzyme; sequence MYLVGEALIG…YEKDRAAHGI (161 aa). The active-site Proton donor is His17. Asp19, Leu48, Lys66, Thr68, and Gln83 together coordinate substrate. Residues 162–393 form a 3-hexulose-6-phosphate synthase region; the sequence is MGFKVQRLWD…IDQFRIMTDF (232 aa).

In the N-terminal section; belongs to the formaldehyde-activating enzyme family. It in the C-terminal section; belongs to the HPS/KGPDC family. HPS subfamily.

The catalysed reaction is 5,6,7,8-tetrahydromethanopterin + formaldehyde = 5,10-methylenetetrahydromethanopterin + H2O. It carries out the reaction D-ribulose 5-phosphate + formaldehyde = D-arabino-hex-3-ulose 6-phosphate. The protein operates within carbohydrate biosynthesis; D-ribose 5-phosphate biosynthesis. Functionally, catalyzes the condensation of formaldehyde with tetrahydromethanopterin (H(4)MPT) to 5,10-methylenetetrahydromethanopterin. Its function is as follows. Catalyzes the reversible formation of ribulose-5-phosphate and formaldehyde from 3-hexulose-6-phosphate. The polypeptide is Bifunctional enzyme Fae/Hps (Methanoregula boonei (strain DSM 21154 / JCM 14090 / 6A8)).